Consider the following 226-residue polypeptide: Isoprenyl transferase (226 aa).

Aspartate 12 is an active-site residue. Aspartate 12 is a binding site for Mg(2+). Substrate contacts are provided by residues 13–16, tryptophan 17, lysine 25, histidine 29, and 57–59; these read GNAR and SSE. Residue asparagine 60 is the Proton acceptor of the active site. Substrate contacts are provided by residues tryptophan 61, arginine 63, arginine 174, and 180 to 182; that span reads RIS. Glutamate 193 lines the Mg(2+) pocket.

This sequence belongs to the UPP synthase family. Homodimer. It depends on Mg(2+) as a cofactor.

In terms of biological role, catalyzes the condensation of isopentenyl diphosphate (IPP) with allylic pyrophosphates generating different type of terpenoids. This chain is Isoprenyl transferase, found in Rickettsia bellii (strain RML369-C).